Here is a 550-residue protein sequence, read N- to C-terminus: Chaperonin GroEL (550 aa).

ATP is bound by residues 30–33 (TLGP), K51, 87–91 (DGTTT), G415, 480–482 (NAA), and D496.

Belongs to the chaperonin (HSP60) family. As to quaternary structure, forms a cylinder of 14 subunits composed of two heptameric rings stacked back-to-back. Interacts with the co-chaperonin GroES.

It is found in the cytoplasm. The catalysed reaction is ATP + H2O + a folded polypeptide = ADP + phosphate + an unfolded polypeptide.. Its function is as follows. Together with its co-chaperonin GroES, plays an essential role in assisting protein folding. The GroEL-GroES system forms a nano-cage that allows encapsulation of the non-native substrate proteins and provides a physical environment optimized to promote and accelerate protein folding. The protein is Chaperonin GroEL of Variovorax paradoxus (strain S110).